The sequence spans 276 residues: Phospholipid phosphatase 2 (276 aa).

Residues 1 to 4 are Cytoplasmic-facing; that stretch reads MERR. The helical transmembrane segment at 5 to 25 threads the bilayer; sequence WVFVLLDVLCVLVASLPFIIL. The Lumenal portion of the chain corresponds to 26–51; the sequence is TLVNAPYKRGFYCGDDSIRYPYRPDT. Residues 52 to 72 form a helical membrane-spanning segment; sequence ITHGLMAGVIITATVVLVSSG. Residues 73–87 are Cytoplasmic-facing; the sequence is EAYLVYTDRLYSRSD. Residues 88–108 traverse the membrane as a helical segment; it reads FNNYVAAIYKVLGTFLFGAAV. Topologically, residues 109-161 are lumenal; that stretch reads SQSLTDLAKYMIGRLRPSFLAVCDPDWSRVNCSGYVQVEVCRGSPANVTEARL. The phosphatase sequence motif I stretch occupies residues 117–125; that stretch reads KYMIGRLRP. 2 N-linked (GlcNAc...) asparagine glycosylation sites follow: N139 and N155. The helical transmembrane segment at 162–182 threads the bilayer; the sequence is SFYSGHSSFGMYCMLFLALYV. The phosphatase sequence motif II stretch occupies residues 164 to 167; sequence YSGH. Residue H167 is the Proton donors of the active site. Residues 183–189 lie on the Cytoplasmic side of the membrane; the sequence is QARLCWK. The chain crosses the membrane as a helical span at residues 190-210; it reads WARLLRPTVQFFLVAFAIYVG. The Lumenal portion of the chain corresponds to 211–225; the sequence is YTRVSDNKHHWSDVL. The interval 212–223 is phosphatase sequence motif III; sequence TRVSDNKHHWSD. H219 functions as the Nucleophile in the catalytic mechanism. The helical transmembrane segment at 226–246 threads the bilayer; sequence VGLLQGALVACLTVCYVSDFF. Residues 247-276 are Cytoplasmic-facing; sequence KSRPPQSCQENEESERKPSLSLTLTLGDRP. Residues 252-276 form a disordered region; the sequence is QSCQENEESERKPSLSLTLTLGDRP.

Belongs to the PA-phosphatase related phosphoesterase family. In terms of assembly, forms functional homodimers and homooligomers. Can also form heterooligomers with PLPP1 and PLPP3. N-glycosylated. As to expression, expressed in the brain.

Its subcellular location is the membrane. The protein resides in the cell membrane. The protein localises to the early endosome membrane. It is found in the endoplasmic reticulum membrane. It carries out the reaction a 1,2-diacyl-sn-glycero-3-phosphate + H2O = a 1,2-diacyl-sn-glycerol + phosphate. It catalyses the reaction 1,2-dihexadecanoyl-sn-glycero-3-phosphate + H2O = 1,2-dihexadecanoyl-sn-glycerol + phosphate. The catalysed reaction is 1,2-di-(9Z-octadecenoyl)-sn-glycero-3-phosphate + H2O = 1,2-di-(9Z-octadecenoyl)-sn-glycerol + phosphate. The enzyme catalyses a monoacyl-sn-glycero-3-phosphate + H2O = a monoacylglycerol + phosphate. It carries out the reaction (9Z)-octadecenoyl-sn-glycero-3-phosphate + H2O = (9Z-octadecenoyl)-glycerol + phosphate. It catalyses the reaction sphing-4-enine 1-phosphate + H2O = sphing-4-enine + phosphate. The catalysed reaction is an N-acylsphing-4-enine 1-phosphate + H2O = an N-acylsphing-4-enine + phosphate. The enzyme catalyses N-(octanoyl)-sphing-4-enine-1-phosphate + H2O = N-octanoylsphing-4-enine + phosphate. It carries out the reaction N-(9Z-octadecenoyl)-ethanolamine phosphate + H2O = N-(9Z-octadecenoyl) ethanolamine + phosphate. Its pathway is lipid metabolism; phospholipid metabolism. Magnesium-independent phospholipid phosphatase. Insensitive to N-ethylmaleimide. Its function is as follows. Magnesium-independent phospholipid phosphatase that catalyzes the dephosphorylation of a variety of glycerolipid and sphingolipid phosphate esters including phosphatidate/PA, lysophosphatidate/LPA, sphingosine 1-phosphate/S1P and ceramide 1-phosphate/C1P. Has no apparent extracellular phosphatase activity and therefore most probably acts intracellularly. Also acts on N-oleoyl ethanolamine phosphate/N-(9Z-octadecenoyl)-ethanolamine phosphate, a potential physiological compound. Through dephosphorylation of these bioactive lipid mediators produces new bioactive compounds and may regulate signal transduction in different cellular processes. Indirectly regulates, for instance, cell cycle G1/S phase transition through its phospholipid phosphatase activity. The sequence is that of Phospholipid phosphatase 2 from Rattus norvegicus (Rat).